A 308-amino-acid polypeptide reads, in one-letter code: Probable D,D-dipeptide transport ATP-binding protein DdpF (308 aa).

Positions 8–243 (LRDVHINFPA…PAHPYTRLLL (236 aa)) constitute an ABC transporter domain. Position 49–56 (49–56 (GESGCGKS)) interacts with ATP.

Belongs to the ABC transporter superfamily. As to quaternary structure, the complex is composed of two ATP-binding proteins (DdpD and DdpF), two transmembrane proteins (DdpB and DdpC) and a solute-binding protein (DdpA).

The protein localises to the cell inner membrane. In terms of biological role, part of the ABC transporter complex DdpABCDF, which is probably involved in D,D-dipeptide transport. Probably responsible for energy coupling to the transport system. This is Probable D,D-dipeptide transport ATP-binding protein DdpF from Escherichia coli (strain K12).